A 793-amino-acid chain; its full sequence is E3 UFM1-protein ligase 1 (793 aa).

The residue at position 2 (Ala-2) is an N-acetylalanine. A mediates interaction with DDRGK1 region spans residues 2–200 (ADAWEEIRRL…RGLFSAITRP (199 aa)). The required for E3 UFM1-protein ligase activity stretch occupies residues 2–212 (ADAWEEIRRL…VNSLISKYGF (211 aa)). Positions 121 to 250 (DRLAEEVNDK…KAVFVPDIYS (130 aa)) are involved in CDK5RAP3-binding. Residues 200-400 (PTAVNSLISK…NPVHLITEED (201 aa)) are mediates interaction with TRIP4. The disordered stretch occupies residues 407 to 473 (LESVSTSKKD…SSHTGKKKPE (67 aa)). At Arg-433 the chain carries Omega-N-methylarginine. The residue at position 458 (Ser-458) is a Phosphoserine. Residues 490 to 684 (IQDAPEEFIS…QLKVTEDPAL (195 aa)) are mediates interaction with CDK5RAP3. Position 536 is a phosphothreonine (Thr-536).

The protein belongs to the UFL1 family. Catalytic component of the UFM1 ribosome E3 ligase (UREL) complex, composed of UFL1, DDRGK1 and CDK5RAP3. Interacts with E2-like enzyme UFC1. Interacts with RELA. Interacts with NBN; promoting recruitment to double-strand breaks following DNA damage. Interacts (when phosphorylated) with YWHAG/14-3-3-gamma; sequestering UFL1 and preventing its association with PDCD1/PD-1 substrate. In terms of processing, ubiquitinated, leading to its degradation by the proteasome. Interaction with CDK5RAP3 protects both proteins against ubiquitination and degradation via the proteasome. Phosphorylation at Thr-536 by AMPK promotes its interaction with YWHAG/14-3-3-gamma, thereby preventing UFL1 association with PDCD1/PD-1 substrate.

It localises to the endoplasmic reticulum membrane. The protein resides in the cytoplasm. The protein localises to the cytosol. Its subcellular location is the nucleus. It is found in the chromosome. Its function is as follows. E3 protein ligase that mediates ufmylation, the covalent attachment of the ubiquitin-like modifier UFM1 to lysine residues on target proteins, and which plays a key role in various processes, such as ribosome recycling, response to DNA damage, interferon response or reticulophagy (also called ER-phagy). Catalyzes ufmylation of many protein, such as CD274/PD-L1, CDK5RAP3, CYB5R3, DDRGK1, EIF6, histone H4, MRE11, P4HB, PDCD1/PD-1, TRIP4, RPN1, RPS20/uS10, RPL10/uL16, RPL26/uL24, SYVN1/HRD1 and TP53/p53. As part of the UREL complex, plays a key role in ribosome recycling by catalyzing mono-ufmylation of RPL26/uL24 subunit of the 60S ribosome. Ufmylation of RPL26/uL24 occurs on free 60S ribosomes following ribosome dissociation: it weakens the junction between post-termination 60S subunits and SEC61 translocons, promoting release and recycling of the large ribosomal subunit from the endoplasmic reticulum membrane. Ufmylation of RPL26/uL24 and subsequent 60S ribosome recycling either take place after normal termination of translation or after ribosome stalling during cotranslational translocation at the endoplasmic reticulum. Involved in reticulophagy in response to endoplasmic reticulum stress by mediating ufmylation of proteins such as CYB5R3 and RPN1, thereby promoting lysosomal degradation of ufmylated proteins. Ufmylation in response to endoplasmic reticulum stress is essential for processes such as hematopoiesis, blood vessel morphogenesis or inflammatory response. Mediates ufmylation of DDRGK1 and CDK5RAP3; the role of these modifications is however unclear: as both DDRGK1 and CDK5RAP3 act as substrate adapters for ufmylation, it is uncertain whether ufmylation of these proteins is, a collateral effect or is required for ufmylation. Acts as a negative regulator of T-cell activation by mediating ufmylation and stabilization of PDCD1/PD-1. Also involved in the response to DNA damage: recruited to double-strand break sites following DNA damage and mediates monoufmylation of histone H4 and ufmylation of MRE11. Mediates ufmylation of TP53/p53, promoting its stability. Catalyzes ufmylation of TRIP4, thereby playing a role in nuclear receptor-mediated transcription. Required for hematopoietic stem cell function and hematopoiesis. This Macaca fascicularis (Crab-eating macaque) protein is E3 UFM1-protein ligase 1.